The following is a 29-amino-acid chain: MFKMKFGDTLPRSDFGTGGNKQAPGLELG.

Positions 1–29 are disordered; sequence MFKMKFGDTLPRSDFGTGGNKQAPGLELG.

This is an uncharacterized protein from Saccharomyces cerevisiae (strain ATCC 204508 / S288c) (Baker's yeast).